A 114-amino-acid chain; its full sequence is Ribonuclease P protein component (114 aa).

It belongs to the RnpA family. As to quaternary structure, consists of a catalytic RNA component (M1 or rnpB) and a protein subunit.

The catalysed reaction is Endonucleolytic cleavage of RNA, removing 5'-extranucleotides from tRNA precursor.. Its function is as follows. RNaseP catalyzes the removal of the 5'-leader sequence from pre-tRNA to produce the mature 5'-terminus. It can also cleave other RNA substrates such as 4.5S RNA. The protein component plays an auxiliary but essential role in vivo by binding to the 5'-leader sequence and broadening the substrate specificity of the ribozyme. The polypeptide is Ribonuclease P protein component (Legionella pneumophila (strain Lens)).